A 760-amino-acid chain; its full sequence is DNA replication licensing factor mcm7 (760 aa).

The region spanning 353–559 (VYEKLAKSIA…ETDEHLAQHV (207 aa)) is the MCM domain. Tyrosine 366, glycine 406, alanine 408, lysine 409, serine 410, asparagine 511, arginine 536, and arginine 630 together coordinate ATP. The Arginine finger signature appears at 535 to 538 (SRFD).

Belongs to the MCM family. As to quaternary structure, component of the mcm2-7 complex. The complex forms a toroidal hexameric ring with the proposed subunit order mcm2-mcm6-mcm4-mcm7-mcm3-mcm5. The heterodimers of mcm4/mcm6 and mcm3/mcm5 interact with mcm2 and mcm7. Interacts with sld3 and mcm10.

Its subcellular location is the nucleus. It catalyses the reaction ATP + H2O = ADP + phosphate + H(+). Acts as a component of the MCM2-7 complex (MCM complex) which is the replicative helicase essential for 'once per cell cycle' DNA replication initiation and elongation in eukaryotic cells. Core component of CDC45-MCM-GINS (CMG) helicase, the molecular machine that unwinds template DNA during replication, and around which the replisome is built. The active ATPase sites in the MCM2-7 ring are formed through the interaction surfaces of two neighboring subunits such that a critical structure of a conserved arginine finger motif is provided in trans relative to the ATP-binding site of the Walker A box of the adjacent subunit. The six ATPase active sites, however, are likely to contribute differentially to the complex helicase activity. Required for the progression of S phase. This Schizosaccharomyces pombe (strain 972 / ATCC 24843) (Fission yeast) protein is DNA replication licensing factor mcm7 (mcm7).